The chain runs to 356 residues: Chorismate synthase (356 aa).

The NADP(+) site is built by arginine 44 and arginine 49. FMN is bound by residues 121–123 (HFS), glycine 278, 293–297 (KPTPS), and arginine 320.

The protein belongs to the chorismate synthase family. FMNH2 is required as a cofactor.

The catalysed reaction is 5-O-(1-carboxyvinyl)-3-phosphoshikimate = chorismate + phosphate. Its pathway is metabolic intermediate biosynthesis; chorismate biosynthesis; chorismate from D-erythrose 4-phosphate and phosphoenolpyruvate: step 7/7. Its function is as follows. Catalyzes the anti-1,4-elimination of the C-3 phosphate and the C-6 proR hydrogen from 5-enolpyruvylshikimate-3-phosphate (EPSP) to yield chorismate, which is the branch point compound that serves as the starting substrate for the three terminal pathways of aromatic amino acid biosynthesis. This reaction introduces a second double bond into the aromatic ring system. The sequence is that of Chorismate synthase from Thermococcus gammatolerans (strain DSM 15229 / JCM 11827 / EJ3).